The chain runs to 170 residues: Translocon-associated protein subunit gamma (170 aa).

Residues 1–24 lie on the Lumenal side of the membrane; the sequence is MAEVDEFSAFRHENDVSIEQRIVY. The helical transmembrane segment at 25–45 threads the bilayer; that stretch reads FINSLIVALVPVYLYHAIFFM. Residues 46–51 lie on the Cytoplasmic side of the membrane; that stretch reads SIDDHM. Residues 52–72 traverse the membrane as a helical segment; sequence IIYGSVTLFAAIVLTFAYNNI. Over 73–121 the chain is Lumenal; the sequence is YRMKRLKLSASREHISIASKNKVGDKKKFAAAQKEVQALVTSHEAIAAS. Residues 122-141 traverse the membrane as a helical segment; that stretch reads IMYNNAVFLICVSIFSFIIF. Residues 142-145 lie on the Cytoplasmic side of the membrane; that stretch reads KNVP. Residues 146-168 form a helical membrane-spanning segment; that stretch reads LVYNYIISISLGAGLTSFLSTSS.

Belongs to the TRAP-gamma family. In terms of assembly, heterotrimer of TRAP-alpha, TRAP-beta and TRAP-gamma.

Its subcellular location is the endoplasmic reticulum membrane. Its function is as follows. TRAP proteins are part of a complex whose function is to bind calcium to the ER membrane and thereby regulate the retention of ER resident proteins. This chain is Translocon-associated protein subunit gamma (ssr3), found in Dictyostelium discoideum (Social amoeba).